The following is a 637-amino-acid chain: Chaperone protein HtpG (637 aa).

Positions 1-345 (MSQQETHGFQ…SNDLPLNVSR (345 aa)) are a; substrate-binding. Residues 346–562 (EILQDNHITK…EGEMSSQMIK (217 aa)) form a b region. The segment at 563-637 (LMQAAGQPVP…MNQMLLANLK (75 aa)) is c.

Belongs to the heat shock protein 90 family. Homodimer.

It localises to the cytoplasm. Functionally, molecular chaperone. Has ATPase activity. The polypeptide is Chaperone protein HtpG (Shewanella sp. (strain MR-7)).